A 375-amino-acid polypeptide reads, in one-letter code: Succinyl-diaminopimelate desuccinylase (375 aa).

Histidine 66 contacts Zn(2+). Aspartate 68 is an active-site residue. Zn(2+) is bound at residue aspartate 99. Catalysis depends on glutamate 133, which acts as the Proton acceptor. Zn(2+) contacts are provided by glutamate 134, glutamate 162, and histidine 348.

Belongs to the peptidase M20A family. DapE subfamily. As to quaternary structure, homodimer. The cofactor is Zn(2+). Requires Co(2+) as cofactor.

The catalysed reaction is N-succinyl-(2S,6S)-2,6-diaminopimelate + H2O = (2S,6S)-2,6-diaminopimelate + succinate. It participates in amino-acid biosynthesis; L-lysine biosynthesis via DAP pathway; LL-2,6-diaminopimelate from (S)-tetrahydrodipicolinate (succinylase route): step 3/3. In terms of biological role, catalyzes the hydrolysis of N-succinyl-L,L-diaminopimelic acid (SDAP), forming succinate and LL-2,6-diaminopimelate (DAP), an intermediate involved in the bacterial biosynthesis of lysine and meso-diaminopimelic acid, an essential component of bacterial cell walls. The protein is Succinyl-diaminopimelate desuccinylase of Enterobacter sp. (strain 638).